The primary structure comprises 490 residues: Glutamate--tRNA ligase (490 aa).

The 'HIGH' region signature appears at 10–20; sequence PSPTGSLHIGG. Positions 251–255 match the 'KMSKS' region motif; the sequence is KLSKR. ATP is bound at residue lysine 254.

The protein belongs to the class-I aminoacyl-tRNA synthetase family. Glutamate--tRNA ligase type 1 subfamily. In terms of assembly, monomer.

Its subcellular location is the cytoplasm. It carries out the reaction tRNA(Glu) + L-glutamate + ATP = L-glutamyl-tRNA(Glu) + AMP + diphosphate. Functionally, catalyzes the attachment of glutamate to tRNA(Glu) in a two-step reaction: glutamate is first activated by ATP to form Glu-AMP and then transferred to the acceptor end of tRNA(Glu). The protein is Glutamate--tRNA ligase of Moorella thermoacetica (strain ATCC 39073 / JCM 9320).